We begin with the raw amino-acid sequence, 633 residues long: Extracellular metalloproteinase 5 (633 aa).

The signal sequence occupies residues 1–21 (MHGLLLAAAGLLSLPLHVVAH). The propeptide occupies 22–245 (PQPSTSLAGR…HNVVDYVSHA (224 aa)). Asn-285 is a glycosylation site (N-linked (GlcNAc...) asparagine). Zn(2+) is bound at residue His-428. Glu-429 is a catalytic residue. Residue His-432 coordinates Zn(2+). N-linked (GlcNAc...) asparagine glycosylation is found at Asn-592 and Asn-621.

It belongs to the peptidase M36 family. Zn(2+) serves as cofactor.

It localises to the secreted. Its function is as follows. Secreted metalloproteinase probably acting as a virulence factor. This chain is Extracellular metalloproteinase 5 (MEP5), found in Trichophyton rubrum (Athlete's foot fungus).